The following is a 739-amino-acid chain: MGASVLAMAARGGHTHTVKLLLENGAFVDDCEHACVSEGNTNTHCSAGSVQEARALLEVRALLAAAQHGQGAAVALLLDWGSDARVCHTGTGWSALMLAAAGGSLSVCQQLVERGADPDHTNVLGNTALEVALQLRRRDVQKYLDNITSVRPRPDDEKKRPDVFHALKLGNAQLVKEIVEQDAAQVDVCNADGASPLMMAAVSGQLEVVQLLVEKRADVDRQDSVHGWTALMQATYHGNKEVVKFLLSQGADVQLRAKNGYTAFDLVMLLNDPDTELVRLLASVCMLVDKDKSKQRGKSALRRRASAGTPSPPEDKTGLKSWWNRMSNRFRRLKLTHTLRHGLSTNRLAPFPDAADVPLDATMRAEEGGAEVASPTAPPAGAQSTACSRTEDCGLNGTGSGKEDFLITTMLRNGAPLARLPSEQLKAVIPPFLPPSCFEPWSSERCGSLRDARSTHTHSQRPGRSSAGSDTASISRVVNRSIKFPSITKGPSPSNSGSYNSAHSSGGSNGVGGVNRHSDTHNRSGGSAADSVLSQIAAQRKRAAGLMDSRSPAVETPSPAHTPLPDSRPKLELQKRPQSGNSSRSKSTSPTLTPSPSPTPAHTPAPAHTPAHRPTGASADSQGSASTQQRSRSSGGSSSGTITDEDELSGILRKLSLEKYQPIFEEQEVDMEAFLTLTDGDLQELGIRTDGPRQQILAAISELNAGKGRERQILQETIINFQSSFGSSASTPRAATHTH.

ANK repeat units follow at residues 1–30, 57–86, 91–120, 124–156, 158–188, 192–221, 226–255, and 259–290; these read MGAS…FVDD, LEVR…DARV, TGWS…DPDH, LGNT…RPDD, KKRP…QVDV, DGAS…DVDR, HGWT…DVQL, and NGYT…LVDK. A compositionally biased stretch (basic residues) spans 295 to 305; it reads QRGKSALRRRA. Disordered stretches follow at residues 295-320 and 449-645; these read QRGK…TGLK and LRDA…ITDE. Residues 462-478 show a composition bias toward polar residues; sequence PGRSSAGSDTASISRVV. Composition is skewed to low complexity over residues 490–506 and 582–592; these read GPSP…HSSG and SSRSKSTSPTL. Residues 593-603 show a composition bias toward pro residues; that stretch reads TPSPSPTPAHT. Low complexity predominate over residues 604–641; the sequence is PAPAHTPAHRPTGASADSQGSASTQQRSRSSGGSSSGT. An SAM domain is found at 643–706; that stretch reads TDEDELSGIL…LAAISELNAG (64 aa).

The protein resides in the cell projection. The protein localises to the cilium. Required for renal function. In Danio rerio (Zebrafish), this protein is Ankyrin repeat and SAM domain-containing protein 6 (anks6).